The primary structure comprises 226 residues: UPF0758 protein PSEEN5431 (226 aa).

The MPN domain maps to 102-224 (VMDNPLAVRR…PLSMIEHGWL (123 aa)). Zn(2+) is bound by residues His-173, His-175, and Asp-186. The JAMM motif signature appears at 173–186 (HNHPSGNCEPSQDD).

The protein belongs to the UPF0758 family.

In Pseudomonas entomophila (strain L48), this protein is UPF0758 protein PSEEN5431.